The chain runs to 222 residues: Methionine import system permease protein MetP (222 aa).

An ABC transmembrane type-1 domain is found at 18–212 (TYETLYMTLI…IIVFIIQIIG (195 aa)). 5 helical membrane-spanning segments follow: residues 25 to 45 (TLIS…LLFL), 73 to 93 (FLIL…TILG), 97 to 117 (ALPA…EIAL), 152 to 172 (ISGI…AGAI), and 195 to 215 (FVAT…GDLI).

It belongs to the binding-protein-dependent transport system permease family. CysTW subfamily. The complex is composed of two ATP-binding proteins (MetN), two transmembrane proteins (MetP) and a solute-binding protein (MetQ).

Its subcellular location is the cell membrane. In terms of biological role, part of the ABC transporter complex MetNPQ involved in methionine import. Responsible for the translocation of the substrate across the membrane. It has also been shown to be involved in methionine sulfoxide transport. In Bacillus subtilis (strain 168), this protein is Methionine import system permease protein MetP (metP).